Here is a 115-residue protein sequence, read N- to C-terminus: C-C motif chemokine 6 (115 aa).

The N-terminal stretch at 1–21 (MRHSKTAISFFILVAVLGSQA) is a signal peptide. Disulfide bonds link Cys-49–Cys-72, Cys-50–Cys-88, and Cys-59–Cys-99.

The protein belongs to the intercrine beta (chemokine CC) family.

The protein localises to the secreted. The sequence is that of C-C motif chemokine 6 (Ccl6) from Rattus norvegicus (Rat).